Here is a 202-residue protein sequence, read N- to C-terminus: Small ribosomal subunit protein uS4c (202 aa).

The S4 RNA-binding domain occupies 90–153 (MRLDNVIFRL…KSEAIISKNI (64 aa)).

The protein belongs to the universal ribosomal protein uS4 family. Part of the 30S ribosomal subunit. Contacts protein S5. The interaction surface between S4 and S5 is involved in control of translational fidelity.

Its subcellular location is the plastid. It is found in the chloroplast. Its function is as follows. One of the primary rRNA binding proteins, it binds directly to 16S rRNA where it nucleates assembly of the body of the 30S subunit. In terms of biological role, with S5 and S12 plays an important role in translational accuracy. This chain is Small ribosomal subunit protein uS4c (rps4), found in Hypopterygium didictyon.